The primary structure comprises 778 residues: MAKKQDRKRKVKDEATNDGASGSDQSDNAEEEEDLLQTVKEPGEDSTDDEGIDQEYQSDSSEDLEFESDEEGNYVGRKGGQQESSDEEEVDEEEEDDDDDDDEEEGGKVEDKPTTSSKAETNNEVAPLPALPARDPSKQEYEDSDTSDEEDIRNTVGNIPMHWYDEYKHIGYDWDGNKIIKPIKGDQIDDFLRKIEDPDFWRTVKDPQTGQEVVLSDADIALIKRINSARIPNAEHEEYEPWIEWFTSEVEKMPIKNVPDHKRSFLPSVSEKKRVSRMVHALKMGWMKTTEEVEREKQQKRGPKFYMLWETDTGREQMRRIHDPVSAPKRDLPGHAESYNPPPEYLFDEKETKQWLKLKDEPHKRKLHFMPQKFKSLREVPAYSRYLRERFLRCLDLYLCPRAKRVKLNIDAEYLIPKLPSPRDLQPFPTVESLVYRGHTDLVRSVSVEPKGEYMVSGSDDKTVKIWEIATGRCIRTIETEDVVRCVAWCPNAKLSIIAVATGSRLLLVNPKVGDKLLIKKTDDLLAEEPSNQDIIDNERIKTAVQWSTAEAAEQEKGVRVIINHFKPIRQVTWHGRGDYLATVMPEGANRSALIHQLSKRRSQIPFSKSKGLIQCVLFHPVKPCFFVATQHNIRIYDLVKQELIKKLLTNSKWISGMSIHPKGDNLLVSTYDKKMLWFDLDLSTKPYQTMRLHRNAVRSVAFHLRYPLFASGSDDQAVIVSHGMVYNDLLQNPLIVPLKKLQTHEKRDDFGVLDVCWHPVQPWVFSTGADCTIRLYT.

A compositionally biased stretch (basic residues) spans 1–10 (MAKKQDRKRK). Residues 1–152 (MAKKQDRKRK…DSDTSDEEDI (152 aa)) form a disordered region. Composition is skewed to acidic residues over residues 44–53 (EDSTDDEGID), 60–72 (SSED…DEEG), and 84–105 (SSDE…DEEE). Over residues 114–124 (TTSSKAETNNE) the composition is skewed to polar residues. The span at 142 to 151 (EDSDTSDEED) shows a compositional bias: acidic residues. 7 WD repeats span residues 438–479 (GHTD…RTIE), 481–519 (EDVV…KLLI), 564–606 (NHFK…SQIP), 609–647 (KSKG…LIKK), 650–689 (TNSK…KPYQ), 693–732 (LHRN…DLLQ), and 748–778 (RDDF…RLYT).

Belongs to the WD repeat BOP1/ERB1 family.

It localises to the nucleus. Its subcellular location is the nucleolus. It is found in the nucleoplasm. Its function is as follows. Required for maturation of ribosomal RNAs and formation of the large ribosomal subunit. This chain is Ribosome biogenesis protein BOP1 homolog, found in Drosophila willistoni (Fruit fly).